The following is a 103-amino-acid chain: V-type sodium ATPase subunit G (103 aa).

It belongs to the V-ATPase F subunit family.

Functionally, involved in ATP-driven sodium extrusion. The sequence is that of V-type sodium ATPase subunit G (ntpG) from Enterococcus hirae (strain ATCC 9790 / DSM 20160 / JCM 8729 / LMG 6399 / NBRC 3181 / NCIMB 6459 / NCDO 1258 / NCTC 12367 / WDCM 00089 / R).